The primary structure comprises 311 residues: Ribosomal RNA small subunit methyltransferase H (311 aa).

S-adenosyl-L-methionine-binding positions include 32–34, aspartate 52, phenylalanine 79, aspartate 100, and glutamine 107; that span reads AGH.

The protein belongs to the methyltransferase superfamily. RsmH family.

It localises to the cytoplasm. It catalyses the reaction cytidine(1402) in 16S rRNA + S-adenosyl-L-methionine = N(4)-methylcytidine(1402) in 16S rRNA + S-adenosyl-L-homocysteine + H(+). Specifically methylates the N4 position of cytidine in position 1402 (C1402) of 16S rRNA. This chain is Ribosomal RNA small subunit methyltransferase H, found in Staphylococcus carnosus (strain TM300).